Reading from the N-terminus, the 455-residue chain is MSFIPHKLEQIKKMLDTIGASSVDQLFDEIPRHLRADTLKIKDGINEIQLANLMRKRANKNHHNINYIGAGAYSHHIPAAIWDIVARGEFYTAYTPYQAEASQGGLQVIYEFQTMMAGLTGMDASNASMYDGATALAESVLMAIRSNKKAKSQKVLIAEALHPTYLRVLETITKHQGIEFDIVNLDSKNGKTDVTKLEDFANTNYAAVVIQSPNFLGQLADVDGITNWAHKHGALVVAVTNPMSLAILKSPAEWGDNGADIVCGEGQPMGVPLASGGPYFGFMTCKMAHVRQMPGRIVGRTVDLDGNEGFCLTLQAREQHIRRAKATSNICTNQGLMVTAATIYMSLLGAEGLERVASISHENTQTLATELAKINGVSIRFNSAFFNEVVIDLPVNAETFVTEMEKEAIDAGYFLGEYHSDLANSIMVCATEIHTSEDIKEYIEATKKVLARIGG.

The protein belongs to the GcvP family. N-terminal subunit subfamily. The glycine cleavage system is composed of four proteins: P, T, L and H. In this organism, the P 'protein' is a heterodimer of two subunits.

It carries out the reaction N(6)-[(R)-lipoyl]-L-lysyl-[glycine-cleavage complex H protein] + glycine + H(+) = N(6)-[(R)-S(8)-aminomethyldihydrolipoyl]-L-lysyl-[glycine-cleavage complex H protein] + CO2. Functionally, the glycine cleavage system catalyzes the degradation of glycine. The P protein binds the alpha-amino group of glycine through its pyridoxal phosphate cofactor; CO(2) is released and the remaining methylamine moiety is then transferred to the lipoamide cofactor of the H protein. The protein is Probable glycine dehydrogenase (decarboxylating) subunit 1 of Francisella tularensis subsp. mediasiatica (strain FSC147).